Reading from the N-terminus, the 299-residue chain is tRNA dimethylallyltransferase (299 aa).

5-12 (GPTASGKT) contacts ATP. Position 7-12 (7-12 (TASGKT)) interacts with substrate. 3 interaction with substrate tRNA regions span residues 30 to 33 (DSAL), 154 to 158 (QRLSR), and 235 to 240 (RCVGYR).

The protein belongs to the IPP transferase family. In terms of assembly, monomer. Mg(2+) serves as cofactor.

It carries out the reaction adenosine(37) in tRNA + dimethylallyl diphosphate = N(6)-dimethylallyladenosine(37) in tRNA + diphosphate. In terms of biological role, catalyzes the transfer of a dimethylallyl group onto the adenine at position 37 in tRNAs that read codons beginning with uridine, leading to the formation of N6-(dimethylallyl)adenosine (i(6)A). The polypeptide is tRNA dimethylallyltransferase (Shewanella denitrificans (strain OS217 / ATCC BAA-1090 / DSM 15013)).